A 512-amino-acid chain; its full sequence is Glutathione-binding protein GsiB (512 aa).

Residues 1–26 form the signal peptide; sequence MARAVHRSGLVALGIATALMASCAFA.

This sequence belongs to the bacterial solute-binding protein 5 family. In terms of assembly, the complex is composed of two ATP-binding proteins (GsiA), two transmembrane proteins (GsiC and GsiD) and a solute-binding protein (GsiB).

The protein resides in the periplasm. Functionally, part of the ABC transporter complex GsiABCD involved in glutathione import. Binds glutathione. This Escherichia coli O6:K15:H31 (strain 536 / UPEC) protein is Glutathione-binding protein GsiB.